A 35-amino-acid polypeptide reads, in one-letter code: Photosystem II reaction center protein Y (35 aa).

Topologically, residues 1–4 are lumenal; it reads MDTR. A helical membrane pass occupies residues 5 to 23; it reads LLVVLLPVATAAAWALFNI. The Stromal portion of the chain corresponds to 24–35; that stretch reads GRLALQQLKRMS.

It belongs to the PsbY family. As to quaternary structure, PSII is composed of 1 copy each of membrane proteins PsbA, PsbB, PsbC, PsbD, PsbE, PsbF, PsbH, PsbI, PsbJ, PsbK, PsbL, PsbM, PsbT, PsbX, PsbY, PsbZ, Psb30/Ycf12, at least 3 peripheral proteins of the oxygen-evolving complex and a large number of cofactors. It forms dimeric complexes.

It is found in the plastid. Its subcellular location is the chloroplast thylakoid membrane. In terms of biological role, loosely associated component of the core of photosystem II (PSII), it is not always seen in crystals. PSII is a light-driven water plastoquinone oxidoreductase, using light energy to abstract electrons from H(2)O, generating a proton gradient subsequently used for ATP formation. The sequence is that of Photosystem II reaction center protein Y from Emiliania huxleyi (Coccolithophore).